We begin with the raw amino-acid sequence, 197 residues long: uncharacterized protein (197 aa).

A helical membrane pass occupies residues 11–31 (ICGFSLVALTIAGIVGGVYLV).

The protein localises to the membrane. This is an uncharacterized protein from Mycoplasma pneumoniae (strain ATCC 29342 / M129 / Subtype 1) (Mycoplasmoides pneumoniae).